Here is a 511-residue protein sequence, read N- to C-terminus: 2-isopropylmalate synthase (511 aa).

In terms of domain architecture, Pyruvate carboxyltransferase spans 6 to 269 (IIIFDTTLRD…YTDIKCENIF (264 aa)). Positions 15, 203, 205, and 239 each coordinate Mn(2+). The tract at residues 394–511 (ILEKLSVISG…SLKVEERKMA (118 aa)) is regulatory domain.

It belongs to the alpha-IPM synthase/homocitrate synthase family. LeuA type 1 subfamily. Homodimer. Mn(2+) is required as a cofactor.

It localises to the cytoplasm. It carries out the reaction 3-methyl-2-oxobutanoate + acetyl-CoA + H2O = (2S)-2-isopropylmalate + CoA + H(+). It functions in the pathway amino-acid biosynthesis; L-leucine biosynthesis; L-leucine from 3-methyl-2-oxobutanoate: step 1/4. Its function is as follows. Catalyzes the condensation of the acetyl group of acetyl-CoA with 3-methyl-2-oxobutanoate (2-ketoisovalerate) to form 3-carboxy-3-hydroxy-4-methylpentanoate (2-isopropylmalate). This is 2-isopropylmalate synthase from Campylobacter jejuni subsp. jejuni serotype O:6 (strain 81116 / NCTC 11828).